Consider the following 142-residue polypeptide: Large ribosomal subunit protein uL11 (142 aa).

It belongs to the universal ribosomal protein uL11 family. In terms of assembly, part of the ribosomal stalk of the 50S ribosomal subunit. Interacts with L10 and the large rRNA to form the base of the stalk. L10 forms an elongated spine to which L12 dimers bind in a sequential fashion forming a multimeric L10(L12)X complex. In terms of processing, one or more lysine residues are methylated.

In terms of biological role, forms part of the ribosomal stalk which helps the ribosome interact with GTP-bound translation factors. The protein is Large ribosomal subunit protein uL11 of Vibrio vulnificus (strain YJ016).